Consider the following 159-residue polypeptide: 2-C-methyl-D-erythritol 2,4-cyclodiphosphate synthase (159 aa).

A divalent metal cation-binding residues include Asp10 and His12. 4-CDP-2-C-methyl-D-erythritol 2-phosphate-binding positions include 10–12 (DVH) and 36–37 (HS). His44 contributes to the a divalent metal cation binding site. Residues 58–60 (DIG), 134–137 (TTTE), Phe141, and Arg144 contribute to the 4-CDP-2-C-methyl-D-erythritol 2-phosphate site.

This sequence belongs to the IspF family. Homotrimer. A divalent metal cation is required as a cofactor.

It catalyses the reaction 4-CDP-2-C-methyl-D-erythritol 2-phosphate = 2-C-methyl-D-erythritol 2,4-cyclic diphosphate + CMP. Its pathway is isoprenoid biosynthesis; isopentenyl diphosphate biosynthesis via DXP pathway; isopentenyl diphosphate from 1-deoxy-D-xylulose 5-phosphate: step 4/6. Functionally, involved in the biosynthesis of isopentenyl diphosphate (IPP) and dimethylallyl diphosphate (DMAPP), two major building blocks of isoprenoid compounds. Catalyzes the conversion of 4-diphosphocytidyl-2-C-methyl-D-erythritol 2-phosphate (CDP-ME2P) to 2-C-methyl-D-erythritol 2,4-cyclodiphosphate (ME-CPP) with a corresponding release of cytidine 5-monophosphate (CMP). The polypeptide is 2-C-methyl-D-erythritol 2,4-cyclodiphosphate synthase (Bacteroides thetaiotaomicron (strain ATCC 29148 / DSM 2079 / JCM 5827 / CCUG 10774 / NCTC 10582 / VPI-5482 / E50)).